The sequence spans 183 residues: Ras-related protein Rap-2a (183 aa).

Gly-10–Ser-17 is a binding site for GTP. Positions Tyr-32 to Tyr-40 match the Effector region motif. GTP contacts are provided by residues Asp-57–Thr-61 and Asn-116–Asp-119. S-palmitoyl cysteine attachment occurs at residues Cys-176 and Cys-177. Residue Cys-180 is modified to Cysteine methyl ester. Residue Cys-180 is the site of S-farnesyl cysteine attachment. Residues Val-181–Leu-183 constitute a propeptide, removed in mature form.

Belongs to the small GTPase superfamily. Ras family. In terms of assembly, interacts (GTP-bound form) with RUNDC3A. Interacts with PLCE1. Interacts with ARHGAP29, SGSM1, SGSM2 and SGSM3. Interacts (GTP-bound form preferentially) with TNIK (via the CNH domain); the interaction is direct and recruits RAP2A to the E3 ubiquitin ligase NEDD4. Interacts with MINK1. Interacts (GTP-bound form preferentially) with MAP4K4. Interacts with cytoskeletal actin. Interacts with RGS14; the interaction is GTP-dependent. Ubiquitinated; undergoes 'Lys-63' monoubiquitination and diubiquitination by NEDD4. Multiple lysine residues are probably modified. Ubiquitination requires TNIK, prevents interaction with effectors and inactivates RAP2A. Ubiquitination by the ECS(RAB40B) complex leads to RAP2A localization to lamellipodia plasma membrane, activation, and regulation of sorting at early endosomes for recycling to the lamellipodia plasma membrane. In terms of processing, palmitoylated. Palmitoylation is required for association with recycling endosome membranes and activation of TNIK.

It localises to the midbody. It is found in the cell projection. The protein localises to the lamellipodium membrane. The protein resides in the golgi apparatus. Its subcellular location is the recycling endosome membrane. It localises to the lysosome. The catalysed reaction is GTP + H2O = GDP + phosphate + H(+). Activated by the guanine nucleotide-exchange factors RAPGEF3 and RAPGEF4 in a cAMP-dependent manner. Nucleotide exchange is also specifically stimulated by RAPGEF5, RASGEF1A and RASGEF1B. Its function is as follows. Small GTP-binding protein which cycles between a GDP-bound inactive and a GTP-bound active form. In its active form interacts with and regulates several effectors including MAP4K4, MINK1 and TNIK. Part of a signaling complex composed of NEDD4, RAP2A and TNIK which regulates neuronal dendrite extension and arborization during development. More generally, it is part of several signaling cascades and may regulate cytoskeletal rearrangements, cell migration, cell adhesion and cell spreading. The sequence is that of Ras-related protein Rap-2a (RAP2A) from Sus scrofa (Pig).